A 362-amino-acid chain; its full sequence is Peptide chain release factor 1 (362 aa).

Gln-235 carries the N5-methylglutamine modification.

This sequence belongs to the prokaryotic/mitochondrial release factor family. Methylated by PrmC. Methylation increases the termination efficiency of RF1.

Its subcellular location is the cytoplasm. Peptide chain release factor 1 directs the termination of translation in response to the peptide chain termination codons UAG and UAA. The sequence is that of Peptide chain release factor 1 from Acinetobacter baumannii (strain ACICU).